Here is a 449-residue protein sequence, read N- to C-terminus: Methionine aminopeptidase 2 (449 aa).

A disordered region spans residues 1-91 (MAAQAAPELA…PRIPLTTLFP (91 aa)). Positions 34–50 (EEAENEGDSEDDRDDEQ) are enriched in acidic residues. A compositionally biased stretch (basic residues) spans 61-75 (KKKKKKRPKKKKKTA). Position 199 (His-199) interacts with substrate. A divalent metal cation-binding residues include Asp-219, Asp-230, and His-299. His-307 is a binding site for substrate. Positions 335 and 430 each coordinate a divalent metal cation.

This sequence belongs to the peptidase M24A family. Methionine aminopeptidase eukaryotic type 2 subfamily. Co(2+) is required as a cofactor. Zn(2+) serves as cofactor. Requires Mn(2+) as cofactor. It depends on Fe(2+) as a cofactor.

It is found in the cytoplasm. It catalyses the reaction Release of N-terminal amino acids, preferentially methionine, from peptides and arylamides.. Cotranslationally removes the N-terminal methionine from nascent proteins. The N-terminal methionine is often cleaved when the second residue in the primary sequence is small and uncharged (Met-Ala-, Cys, Gly, Pro, Ser, Thr, or Val). In Trichophyton verrucosum (strain HKI 0517), this protein is Methionine aminopeptidase 2.